A 451-amino-acid polypeptide reads, in one-letter code: Tubulin gamma-2 chain (451 aa).

Ser131 carries the post-translational modification Phosphoserine; by BRSK1. 142-148 lines the GTP pocket; it reads AGGTGSG.

It belongs to the tubulin family. In terms of assembly, component of the gamma-tubulin ring complex (gTuRC) consisting of TUBGCP2, TUBGCP3, TUBGCP4, TUBGCP5 and TUBGCP6 and gamma-tubulin TUBG1 or TUBG2. TUBGCP2, TUBGCP3, TUBGCP4, TUBGCP5 and TUBGCP6 assemble in a 5:5:2:1:1 stoichiometry; each is associated with a gamma-tubulin, thereby arranging 14 gamma-tubulins in a helical manner. Gamma-tubulin at the first position is blocked by TUBGCP3 at the last position, allowing 13 protafilaments to grow into a microtubule. Interacts with alpha-beta tubulin heterodimers; the interaction allows microtubules to nucleate from the gTuRC. Post-translationally, phosphorylation at Ser-131 by BRSK1 regulates centrosome duplication, possibly by mediating relocation of gamma-tubulin and its associated proteins from the cytoplasm to the centrosome.

Its subcellular location is the cytoplasm. The protein resides in the cytoskeleton. The protein localises to the microtubule organizing center. It localises to the centrosome. Its function is as follows. Tubulin is the major constituent of microtubules, protein filaments consisting of alpha- and beta-tubulin heterodimers. Gamma-tubulin is a key component of the gamma-tubulin ring complex (gTuRC) which mediates microtubule nucleation. The gTuRC regulates the minus-end nucleation of alpha-beta tubulin heterodimers that grow into microtubule protafilaments, a critical step in centrosome duplication and spindle formation. The protein is Tubulin gamma-2 chain (TUBG2) of Homo sapiens (Human).